The primary structure comprises 119 residues: Large ribosomal subunit protein bL20 (119 aa).

The protein belongs to the bacterial ribosomal protein bL20 family.

Functionally, binds directly to 23S ribosomal RNA and is necessary for the in vitro assembly process of the 50S ribosomal subunit. It is not involved in the protein synthesizing functions of that subunit. This chain is Large ribosomal subunit protein bL20, found in Streptococcus suis (strain 98HAH33).